The following is a 177-amino-acid chain: Translation initiation factor IF-3 (177 aa).

Belongs to the IF-3 family. In terms of assembly, monomer.

The protein localises to the cytoplasm. In terms of biological role, IF-3 binds to the 30S ribosomal subunit and shifts the equilibrium between 70S ribosomes and their 50S and 30S subunits in favor of the free subunits, thus enhancing the availability of 30S subunits on which protein synthesis initiation begins. In Synechocystis sp. (strain ATCC 27184 / PCC 6803 / Kazusa), this protein is Translation initiation factor IF-3.